The sequence spans 550 residues: Solute carrier family 22 member 6 (550 aa).

The Cytoplasmic portion of the chain corresponds to methionine 1–glutamine 9. The helical transmembrane segment at valine 10 to leucine 30 threads the bilayer. The Extracellular segment spans residues methionine 31–glutamine 135. Asparagine 56, asparagine 92, and asparagine 113 each carry an N-linked (GlcNAc...) asparagine glycan. A helical membrane pass occupies residues leucine 136 to alanine 156. Residues aspartate 157–valine 164 are Cytoplasmic-facing. The helical transmembrane segment at leucine 165–isoleucine 187 threads the bilayer. Residues tyrosine 188–alanine 190 lie on the Extracellular side of the membrane. A helical transmembrane segment spans residues phenylalanine 191–tryptophan 213. Topologically, residues methionine 214–threonine 224 are cytoplasmic. The helical transmembrane segment at leucine 225–proline 245 threads the bilayer. At histidine 246–arginine 248 the chain is on the extracellular side. Residues histidine 249–isoleucine 269 traverse the membrane as a helical segment. The Cytoplasmic segment spans residues glutamate 270–histidine 337. Residues leucine 338–methionine 358 traverse the membrane as a helical segment. The Extracellular segment spans residues aspartate 359–tyrosine 368. A helical transmembrane segment spans residues leucine 369–isoleucine 389. The Cytoplasmic segment spans residues asparagine 390–arginine 395. The chain crosses the membrane as a helical span at residues proline 396–proline 416. Residues glutamine 417–serine 425 lie on the Extracellular side of the membrane. Residues leucine 426–glycine 446 form a helical membrane-spanning segment. At glutamate 447–threonine 456 the chain is on the cytoplasmic side. The chain crosses the membrane as a helical span at residues glycine 457–methionine 477. Residues threonine 478–serine 484 are Extracellular-facing. A helical membrane pass occupies residues valine 485 to proline 505. Over glutamate 506–leucine 550 the chain is Cytoplasmic. The tract at residues proline 513–leucine 550 is disordered.

It belongs to the major facilitator (TC 2.A.1) superfamily. Organic cation transporter (TC 2.A.1.19) family. Post-translationally, glycosylated. Glycosylation is necessary for proper targeting of the transporter to the plasma membrane. Expressed in kidney; in the basolateral membrane of the proximal tubule.

The protein resides in the basolateral cell membrane. It is found in the basal cell membrane. It catalyses the reaction (6R)-L-erythro-5,6,7,8-tetrahydrobiopterin(out) + a dicarboxylate(in) = (6R)-L-erythro-5,6,7,8-tetrahydrobiopterin(in) + a dicarboxylate(out). The enzyme catalyses L-erythro-7,8-dihydrobiopterin(out) + a dicarboxylate(in) = L-erythro-7,8-dihydrobiopterin(in) + a dicarboxylate(out). It carries out the reaction L-sepiapterin(out) + a dicarboxylate(in) = L-sepiapterin(in) + a dicarboxylate(out). The catalysed reaction is prostaglandin F2alpha(out) + a dicarboxylate(in) = prostaglandin F2alpha(in) + a dicarboxylate(out). It catalyses the reaction prostaglandin E2(out) + a dicarboxylate(in) = prostaglandin E2(in) + a dicarboxylate(out). The enzyme catalyses 3',5'-cyclic AMP(out) + a dicarboxylate(in) = 3',5'-cyclic AMP(in) + a dicarboxylate(out). It carries out the reaction 3',5'-cyclic GMP(out) + a dicarboxylate(in) = 3',5'-cyclic GMP(in) + a dicarboxylate(out). The catalysed reaction is urate(out) + a dicarboxylate(in) = urate(in) + a dicarboxylate(out). It catalyses the reaction kynurenate(out) + glutarate(in) = kynurenate(in) + glutarate(out). The enzyme catalyses (indol-3-yl)acetate(out) + a dicarboxylate(in) = (indol-3-yl)acetate(in) + a dicarboxylate(out). It carries out the reaction indoxyl sulfate(out) + a dicarboxylate(in) = indoxyl sulfate(in) + a dicarboxylate(out). The catalysed reaction is N-benzoylglycine(out) + a dicarboxylate(in) = N-benzoylglycine(in) + a dicarboxylate(out). It catalyses the reaction 3-carboxy-4-methyl-5-propyl-2-furanpropanoate(out) + a dicarboxylate(in) = 3-carboxy-4-methyl-5-propyl-2-furanpropanoate(in) + a dicarboxylate(out). Its function is as follows. Secondary active transporter that functions as a Na(+)-independent organic anion (OA)/dicarboxylate antiporter where the uptake of one molecule of OA into the cell is coupled with an efflux of one molecule of intracellular dicarboxylate such as 2-oxoglutarate or glutarate. Mediates the uptake of OA across the basolateral side of proximal tubule epithelial cells, thereby contributing to the renal elimination of endogenous OA from the systemic circulation into the urine. Functions as a biopterin transporters involved in the uptake and the secretion of coenzymes tetrahydrobiopterin (BH4), dihydrobiopterin (BH2) and sepiapterin to urine, thereby determining baseline levels of blood biopterins. Transports prostaglandin E2 (PGE2) and prostaglandin F2-alpha (PGF2-alpha) and may contribute to their renal excretion. Also mediates the uptake of cyclic nucleotides such as cAMP and cGMP. Involved in the transport of neuroactive tryptophan metabolites kynurenate (KYNA) and xanthurenate (XA) and may contribute to their secretion from the brain. May transport glutamate. Also involved in the disposition of uremic toxins and potentially toxic xenobiotics by the renal organic anion secretory pathway, helping reduce their undesired toxicological effects on the body. Uremic toxins include the indoxyl sulfate (IS), hippurate/N-benzoylglycine (HA), indole acetate (IA), 3-carboxy-4- methyl-5-propyl-2-furanpropionate (CMPF) and urate. Xenobiotics include the mycotoxin ochratoxin (OTA). May also contribute to the transport of organic compounds in testes across the blood-testis-barrier. The protein is Solute carrier family 22 member 6 of Macaca fascicularis (Crab-eating macaque).